The following is a 121-amino-acid chain: Small ribosomal subunit protein bS16m (121 aa).

It belongs to the bacterial ribosomal protein bS16 family. In terms of assembly, component of the mitochondrial small ribosomal subunit (mt-SSU). Mature yeast 74S mitochondrial ribosomes consist of a small (37S) and a large (54S) subunit. The 37S small subunit contains a 15S ribosomal RNA (15S mt-rRNA) and 34 different proteins. The 54S large subunit contains a 21S rRNA (21S mt-rRNA) and 46 different proteins.

It is found in the mitochondrion. Component of the mitochondrial ribosome (mitoribosome), a dedicated translation machinery responsible for the synthesis of mitochondrial genome-encoded proteins, including at least some of the essential transmembrane subunits of the mitochondrial respiratory chain. The mitoribosomes are attached to the mitochondrial inner membrane and translation products are cotranslationally integrated into the membrane. This Saccharomyces cerevisiae (strain ATCC 204508 / S288c) (Baker's yeast) protein is Small ribosomal subunit protein bS16m (MRPS16).